Consider the following 493-residue polypeptide: MSDTIQQEAPDNLQVTPTHGRSFAEKVWSACLGLIQENINTLAFKTWFLPIRPLSFSGSELTIEVPSQFFYEWIEENYSVHVKQALRQVIGPEAKLMYSIVIDKSQGQPVTIELPHQIDAAPAERSVRPEAPGQKASAERERLEIARPRFESNLNPKYTFSTLVRGDCNSLAFAASKSIAQNPGQNAFNPLVIYGGVGLGKTHMMQAIGNSVLENRITDAVLYVSSEKFAIDFVNAIQNGNIQEFSAFYRNIDVLIIDDIQFFAGKEKTQEEIFHIFNTLHQSNKQIILSADRPIKEIKGIEDRLISRFNWGLSTDIQAPDYETRKAIIQSKLKQSGVSLDPVVIEFIATNVTSNVRELEGCIVKLLAAHSLDNQEIDLQFAKSTLKDIIRYNTKQLTLETIEKAVCSYFSITSNDLKGKSKKKEIAVGRQIAMYLSKDMTDSSLKTIGLHFGGRDHSTVIHALNTIEKKIAASNEERKKIEELRKRIEIMSM.

Positions 1 to 105 (MSDTIQQEAP…LMYSIVIDKS (105 aa)) are domain I, interacts with DnaA modulators. The segment at 105–152 (SQGQPVTIELPHQIDAAPAERSVRPEAPGQKASAERERLEIARPRFES) is domain II. The tract at residues 121-140 (APAERSVRPEAPGQKASAER) is disordered. The segment at 153 to 370 (NLNPKYTFST…GCIVKLLAAH (218 aa)) is domain III, AAA+ region. 4 residues coordinate ATP: G198, G200, K201, and T202. The interval 371–493 (SLDNQEIDLQ…LRKRIEIMSM (123 aa)) is domain IV, binds dsDNA.

It belongs to the DnaA family. Oligomerizes as a right-handed, spiral filament on DNA at oriC.

Its subcellular location is the cytoplasm. In terms of biological role, plays an essential role in the initiation and regulation of chromosomal replication. ATP-DnaA binds to the origin of replication (oriC) to initiate formation of the DNA replication initiation complex once per cell cycle. Binds the DnaA box (a 9 base pair repeat at the origin) and separates the double-stranded (ds)DNA. Forms a right-handed helical filament on oriC DNA; dsDNA binds to the exterior of the filament while single-stranded (ss)DNA is stabiized in the filament's interior. The ATP-DnaA-oriC complex binds and stabilizes one strand of the AT-rich DNA unwinding element (DUE), permitting loading of DNA polymerase. After initiation quickly degrades to an ADP-DnaA complex that is not apt for DNA replication. Binds acidic phospholipids. The chain is Chromosomal replication initiator protein DnaA from Chlorobaculum tepidum (strain ATCC 49652 / DSM 12025 / NBRC 103806 / TLS) (Chlorobium tepidum).